Here is a 23-residue protein sequence, read N- to C-terminus: Potassium channel toxin alpha-KTx 13.3 (23 aa).

3 disulfide bridges follow: Cys2/Cys15, Cys5/Cys20, and Cys9/Cys22. The interval 13 to 20 (GKCINGRC) is interaction with Ca(2+)-activated K(+) channels. Tyrosine amide is present on Tyr23.

In terms of tissue distribution, expressed by the venom gland.

The protein localises to the secreted. Its function is as follows. Reversibly blocks Shaker B potassium channels, with a dissociation constant of 200 nM. This is Potassium channel toxin alpha-KTx 13.3 from Tityus pachyurus (Colombian scorpion).